A 355-amino-acid chain; its full sequence is Peptide chain release factor 1 (355 aa).

Gln-229 bears the N5-methylglutamine mark. A disordered region spans residues Leu-280–Glu-299.

This sequence belongs to the prokaryotic/mitochondrial release factor family. Methylated by PrmC. Methylation increases the termination efficiency of RF1.

It localises to the cytoplasm. Its function is as follows. Peptide chain release factor 1 directs the termination of translation in response to the peptide chain termination codons UAG and UAA. In Parvibaculum lavamentivorans (strain DS-1 / DSM 13023 / NCIMB 13966), this protein is Peptide chain release factor 1.